The following is a 448-amino-acid chain: Exodeoxyribonuclease 7 large subunit (448 aa).

This sequence belongs to the XseA family. Heterooligomer composed of large and small subunits.

Its subcellular location is the cytoplasm. The enzyme catalyses Exonucleolytic cleavage in either 5'- to 3'- or 3'- to 5'-direction to yield nucleoside 5'-phosphates.. Bidirectionally degrades single-stranded DNA into large acid-insoluble oligonucleotides, which are then degraded further into small acid-soluble oligonucleotides. This Shewanella baltica (strain OS185) protein is Exodeoxyribonuclease 7 large subunit.